We begin with the raw amino-acid sequence, 327 residues long: Phenylalanine--tRNA ligase alpha subunit (327 aa).

E252 serves as a coordination point for Mg(2+).

The protein belongs to the class-II aminoacyl-tRNA synthetase family. Phe-tRNA synthetase alpha subunit type 1 subfamily. As to quaternary structure, tetramer of two alpha and two beta subunits. Mg(2+) serves as cofactor.

The protein resides in the cytoplasm. The enzyme catalyses tRNA(Phe) + L-phenylalanine + ATP = L-phenylalanyl-tRNA(Phe) + AMP + diphosphate + H(+). The chain is Phenylalanine--tRNA ligase alpha subunit from Shigella boydii serotype 18 (strain CDC 3083-94 / BS512).